Reading from the N-terminus, the 356-residue chain is Glucose-1-phosphate thymidylyltransferase (356 aa).

Mg(2+) is bound by residues Asp-107 and Asp-221.

It belongs to the glucose-1-phosphate thymidylyltransferase family. The cofactor is Mg(2+).

The enzyme catalyses dTTP + alpha-D-glucose 1-phosphate + H(+) = dTDP-alpha-D-glucose + diphosphate. The protein operates within antibiotic biosynthesis. In terms of biological role, involved in the biosynthesis of the two 2,6-deoxysugars, dTDP-L-oleandrose and dTDP-D-desosamine, attached to the macrolactone ring oleandolide to produce the aglycone antibiotic oleandomycin. Catalyzes the formation of dTDP-glucose from deoxythymidine triphosphate (dTTP) and glucose 1-phosphate. In Streptomyces antibioticus, this protein is Glucose-1-phosphate thymidylyltransferase.